We begin with the raw amino-acid sequence, 1419 residues long: Formin-1 (1419 aa).

The microtubule-binding stretch occupies residues 1–622 (MEGTHCTLQL…TAEPQHQSPP (622 aa)). Disordered stretches follow at residues 138–194 (DWQG…MGKD), 262–331 (LGRE…KVVA), 343–641 (VVKT…TPKD), and 685–711 (SLTE…DTEE). Residues 151 to 163 (RSTHGNKKPRRSS) show a composition bias toward basic residues. Residues 298-317 (SHQDPEKHPEAEKDEMEKPA) show a composition bias toward basic and acidic residues. Residues 394 to 411 (RSSQSPAGETASISSVSA) show a composition bias toward polar residues. Basic and acidic residues predominate over residues 425 to 438 (IESEKLDEAPEGKR). The segment at 456–842 (NKRRAGLPLG…LNISSLSQLS (387 aa)) is mediates interaction with alpha-catenin. Positions 504–517 (FNNSASQSSTHKQT) are enriched in polar residues. A compositionally biased stretch (pro residues) spans 520–529 (VPSPLSPRLP). Polar residues predominate over residues 614 to 623 (AEPQHQSPPG). Basic and acidic residues predominate over residues 685–694 (SLTEQDDRTP). The stretch at 720–774 (AEYQAAILHLKREHKEEIENLQAQFELRAFHIRGEHAMITARLEETIENLKHELE) forms a coiled coil. 2 disordered regions span residues 859-978 (GMAS…AIEP) and 1390-1419 (SEKK…VTTN). 2 stretches are compositionally biased toward pro residues: residues 868–882 (LPPP…PPLP) and 890–958 (PAPP…PPPG). The FH1 domain occupies 870–957 (PPPASIPPPP…PPGLAPPPPP (88 aa)). Residues 972-1388 (RKPAIEPSCP…KMAQESVSKL (417 aa)) form the FH2 domain.

This sequence belongs to the formin homology family. Cappuccino subfamily. In terms of assembly, interacts with alpha-catenin and may interact with tubulin. Phosphorylated on serine and possibly threonine residues.

The protein localises to the nucleus. The protein resides in the cytoplasm. It localises to the cell junction. It is found in the adherens junction. Its subcellular location is the cell membrane. Plays a role in the formation of adherens junction and the polymerization of linear actin cables. This is Formin-1 (FMN1) from Homo sapiens (Human).